Reading from the N-terminus, the 77-residue chain is Apelin (77 aa).

A signal peptide spans 1–22 (MNLRLCVQALLLLWLSLTAVCG). Residues 23-41 (GSLMPLPDGNGLEDGNVRH) constitute a propeptide that is removed on maturation. The interval 43-77 (VQPRGSRNGPGPWQGGRRKFRRQRPRLSHKGPMPF) is disordered. The segment covering 58-71 (GRRKFRRQRPRLSH) has biased composition (basic residues).

Belongs to the apelin family. In terms of processing, several active peptides may be produced by proteolytic processing of the peptide precursor. Expressed in the brain with highest levels in the frontal cortex, thalamus, hypothalamus and midbrain. Secreted by the mammary gland into the colostrum and the milk.

It is found in the secreted. It localises to the extracellular space. Its function is as follows. Peptide hormone that functions as endogenous ligand for the G-protein-coupled apelin receptor (APLNR/APJ), that plays a role in cadiovascular homeostasis. Functions as a balanced agonist activating both G(i) protein pathway and beta-arrestin pathway of APLNR. Downstream G proteins activation, apelin can inhibit cAMP production and activate key intracellular effectors such as ERKs. On the other hand, APLNR activation induces beta-arrestin recruitment to the membrane leading to desensitization and internalization of the receptor. Apelin blunts cardiac hypertrophic induction from APLNR on response to pathological stimuli, but also induces myocardial hypertrophy under normal conditions. Apelin-36 dissociates more hardly than (pyroglu)apelin-13 from APLNR. Involved in the regulation of cardiac precursor cell movements during gastrulation and heart morphogenesis. Has an inhibitory effect on cytokine production in response to T-cell receptor/CD3 cross-linking; the oral intake of apelin in the colostrum and the milk might therefore modulate immune responses in neonates. Plays a role in early coronary blood vessels formation. Mediates myocardial contractility in an ERK1/2-dependent manner. May also have a role in the central control of body fluid homeostasis by influencing vasopressin release and drinking behavior. In terms of biological role, (Microbial infection) Endogenous ligand for the apelin receptor (APLNR), an alternative coreceptor with CD4 for HIV-1 infection. Inhibits HIV-1 entry in cells coexpressing CD4 and APLNR. Apelin-36 has a greater inhibitory activity on HIV infection than other synthetic apelin derivatives. This Homo sapiens (Human) protein is Apelin.